The sequence spans 737 residues: Phosphoribosylformylglycinamidine synthase subunit PurL (737 aa).

The active site involves His-50. 2 residues coordinate ATP: Tyr-53 and Lys-92. Mg(2+) is bound at residue Glu-94. Residues 95 to 98 (SHNH) and Arg-117 each bind substrate. Residue His-96 is the Proton acceptor of the active site. Asp-118 contributes to the Mg(2+) binding site. Gln-241 is a substrate binding site. Mg(2+) is bound at residue Asp-269. A substrate-binding site is contributed by 313 to 315 (ESQ). Residues Asp-494 and Gly-531 each coordinate ATP. Asn-532 lines the Mg(2+) pocket. Residue Ser-534 participates in substrate binding.

It belongs to the FGAMS family. Monomer. Part of the FGAM synthase complex composed of 1 PurL, 1 PurQ and 2 PurS subunits.

It is found in the cytoplasm. It catalyses the reaction N(2)-formyl-N(1)-(5-phospho-beta-D-ribosyl)glycinamide + L-glutamine + ATP + H2O = 2-formamido-N(1)-(5-O-phospho-beta-D-ribosyl)acetamidine + L-glutamate + ADP + phosphate + H(+). The protein operates within purine metabolism; IMP biosynthesis via de novo pathway; 5-amino-1-(5-phospho-D-ribosyl)imidazole from N(2)-formyl-N(1)-(5-phospho-D-ribosyl)glycinamide: step 1/2. Part of the phosphoribosylformylglycinamidine synthase complex involved in the purines biosynthetic pathway. Catalyzes the ATP-dependent conversion of formylglycinamide ribonucleotide (FGAR) and glutamine to yield formylglycinamidine ribonucleotide (FGAM) and glutamate. The FGAM synthase complex is composed of three subunits. PurQ produces an ammonia molecule by converting glutamine to glutamate. PurL transfers the ammonia molecule to FGAR to form FGAM in an ATP-dependent manner. PurS interacts with PurQ and PurL and is thought to assist in the transfer of the ammonia molecule from PurQ to PurL. This chain is Phosphoribosylformylglycinamidine synthase subunit PurL, found in Rhodopseudomonas palustris (strain BisA53).